The following is a 1782-amino-acid chain: AF4/FMR2 family member lilli (1782 aa).

Disordered regions lie at residues 42–84 (NMED…PSEG), 150–313 (ASSS…PPPE), 434–515 (MPTP…QQQQ), 605–637 (GGSS…NLSR), 691–732 (EKLH…QQRY), 768–820 (GALP…LQIP), 839–891 (KVQP…SNKK), 911–1064 (VAAA…AAAS), 1091–1126 (AGNS…QHKQ), 1166–1234 (LPQS…KQGQ), 1296–1327 (ARQH…TPKD), 1386–1420 (LKQE…EQLS), 1450–1484 (QESA…QQQQ), and 1674–1701 (GNTP…GKIV). The segment covering 54 to 80 (REKYERQQGIQSDDRETSLFGEPRRLN) has biased composition (basic and acidic residues). Low complexity-rich tracts occupy residues 164-180 (QQQQ…QQQQ) and 211-260 (PSSS…MSSP). Residues 435–447 (PTPPKASPTPPAI) show a composition bias toward pro residues. Thr-443 is subject to Phosphothreonine. Residues 450 to 463 (MKTEKNHSLEKQDS) are compositionally biased toward basic and acidic residues. Acidic residues predominate over residues 465 to 475 (LENDLELSESD). A phosphoserine mark is found at Ser-472 and Ser-474. Composition is skewed to low complexity over residues 484–515 (SAGN…QQQQ) and 609–622 (GSCM…SSSN). Residues 623–634 (KTPSPTDSNRWN) are compositionally biased toward polar residues. Positions 691–701 (EKLHDEPRHVG) are enriched in basic and acidic residues. Composition is skewed to low complexity over residues 714–730 (QQQQ…QQQQ) and 782–805 (SDSG…GGSS). The span at 859–869 (PRQKKPRKKKM) shows a compositional bias: basic residues. Residues Ser-878 and Ser-879 each carry the phosphoserine modification. Residues 920 to 932 (KKGRGRPRKQAQQ) constitute a DNA-binding region (a.T hook). Low complexity predominate over residues 929–972 (QAQQQQQQQQQQLQQSGNLSSASASSSQAKGPTLTAAKKPLAKA). Phosphoserine is present on residues Ser-949 and Ser-951. The span at 973–982 (SVSNSNSTAP) shows a compositional bias: polar residues. Low complexity-rich tracts occupy residues 996–1018 (SNSS…TMAA), 1033–1064 (SSSS…AAAS), 1105–1116 (SVGSSSNSSSSS), and 1174–1196 (SSSD…SSSS). Over residues 1308-1318 (AQQNGHLSSRS) the composition is skewed to polar residues. Polar residues predominate over residues 1450–1460 (QESAANGSPNK). Residue Ser-1457 is modified to Phosphoserine. 2 stretches are compositionally biased toward low complexity: residues 1461 to 1484 (LQQQ…QQQQ) and 1674 to 1694 (GNTP…SGSN).

Belongs to the AF4 family.

The protein localises to the nucleus. Functionally, has a role in transcriptional regulation. Acts in parallel with the Ras/MAPK and the PI3K/PKB pathways in the control of cell identity and cellular growth. Essential for regulation of the cytoskeleton and cell growth but not for cell proliferation or growth rate. Required specifically for the microtubule-based basal transport of lipid droplets. Plays a partially redundant function downstream of Raf in cell fate specification in the developing eye. Pair-rule protein that regulates embryonic cellularization, gastrulation and segmentation. The polypeptide is AF4/FMR2 family member lilli (Drosophila mojavensis (Fruit fly)).